The primary structure comprises 278 residues: Ras-related protein Rab-40A-like (278 aa).

GTP-binding residues include G26, K27, and S28. A Mg(2+)-binding site is contributed by S28. Positions 41-49 are switch-I; sequence SPYSHLGGI. Residue D69 coordinates Mg(2+). GTP-binding residues include G72, N126, and R127. Residues 72-88 are switch-II; the sequence is GQGRFCTIFRSYSRGAQ. The SOCS box domain occupies 175-228; that stretch reads LLRHRLNWLGRPSKVLSLQDLCCRTIVSCTPVHLVDKLPLPIALRSHLKSFSMA. C270 carries S-palmitoyl cysteine lipidation. A lipid anchor (S-geranylgeranyl cysteine) is attached at C275.

This sequence belongs to the small GTPase superfamily. Rab family. The cofactor is Mg(2+). As to expression, expressed in brain, lung, heart, skeletal muscle, kidney and liver. Highest expression in brain. Expressed in fetal brain and kidney.

It localises to the membrane. The protein localises to the cytoplasm. It is found in the mitochondrion. It carries out the reaction GTP + H2O = GDP + phosphate + H(+). The protein operates within protein modification; protein ubiquitination. Regulated by guanine nucleotide exchange factors (GEFs) which promote the exchange of bound GDP for free GTP. Regulated by GTPase activating proteins (GAPs) which increase the GTP hydrolysis activity. Inhibited by GDP dissociation inhibitors (GDIs). Functionally, may act as substrate-recognition component of the ECS(RAB40) E3 ubiquitin ligase complex which mediates the ubiquitination and subsequent proteasomal degradation of target proteins. The Rab40 subfamily belongs to the Rab family that are key regulators of intracellular membrane trafficking, from the formation of transport vesicles to their fusion with membranes. Rabs cycle between an inactive GDP-bound form and an active GTP-bound form that is able to recruit to membranes different sets of downstream effectors directly responsible for vesicle formation, movement, tethering and fusion. The polypeptide is Ras-related protein Rab-40A-like (Homo sapiens (Human)).